We begin with the raw amino-acid sequence, 449 residues long: MFKTLTQNLTKIFDKLVSSGILTEAQIDAAMRDIRVALLESDVALPVIKDFIAEVKQKALGQEVIKSVSPGQMIIKIIHEEMINLLASSKSETKLNLNSKPPVNFLMVGLQGSGKTTASSKLALRLRNQNKKVLLVSLDTYRPAAQEQLAILANSVQINSLPIVQGEKPLDIVKRAIAEAKISAYDVVIYDTAGRTQIDKAMMEEALAIKKIVEPTETLLVIDSMTGQDAVVTASSFNEKLAISGLILSRIDGDSKGGAALSVKYITKKPIKFLSSGENLIDLEEFDAERLASRILDMGDIISFVEKAASIVDREEAEKTAAKLKKGKFDLNDYLQQMRSIKKMGGFGSILSMLPGSGKIMDQIDQSKLNSKIIEHQEAIILSMTPKERKNPDIINASRRKRIAVGAGTTVQKVNILLKQYKQISEIMKKVSKMNPKNLLRSGIGKLFS.

Residues 109–116 (GLQGSGKT), 191–195 (DTAGR), and 249–252 (SRID) contribute to the GTP site.

The protein belongs to the GTP-binding SRP family. SRP54 subfamily. Part of the signal recognition particle protein translocation system, which is composed of SRP and FtsY. SRP is a ribonucleoprotein composed of Ffh and a 4.5S RNA molecule.

It localises to the cytoplasm. It catalyses the reaction GTP + H2O = GDP + phosphate + H(+). In terms of biological role, involved in targeting and insertion of nascent membrane proteins into the cytoplasmic membrane. Binds to the hydrophobic signal sequence of the ribosome-nascent chain (RNC) as it emerges from the ribosomes. The SRP-RNC complex is then targeted to the cytoplasmic membrane where it interacts with the SRP receptor FtsY. Interaction with FtsY leads to the transfer of the RNC complex to the Sec translocase for insertion into the membrane, the hydrolysis of GTP by both Ffh and FtsY, and the dissociation of the SRP-FtsY complex into the individual components. This is Signal recognition particle protein from Rickettsia conorii (strain ATCC VR-613 / Malish 7).